We begin with the raw amino-acid sequence, 240 residues long: uncharacterized protein (240 aa).

At 1–85 the chain is on the cytoplasmic side; the sequence is MSGFIKSTLL…LCGCCCWTNT (85 aa). A helical membrane pass occupies residues 86-106; the sequence is IGWAPLLALLPVIGPLLMYWV. Over 107–131 the chain is Extracellular; it reads HDKLIELADDRYKLPAEIKVKMHGN. The helical transmembrane segment at 132 to 152 threads the bilayer; the sequence is IVIDLLISLVPILGSVFAWLH. At 153 to 240 the chain is on the cytoplasmic side; sequence ACSTRNAAIV…TNGRPQRGYR (88 aa). Positions 181–240 are disordered; sequence QKEENEKHSNANTAPPVVGGNKNVNGNRNNSKMYNRPPVTAPPAPAYTRSTNGRPQRGYR. Over residues 197 to 210 the composition is skewed to low complexity; that stretch reads VVGGNKNVNGNRNN.

Its subcellular location is the membrane. This is an uncharacterized protein from Saccharomyces cerevisiae (strain ATCC 204508 / S288c) (Baker's yeast).